Consider the following 353-residue polypeptide: Photosystem II protein D1 (353 aa).

The residue at position 2 (Thr2) is an N-acetylthreonine. Thr2 carries the post-translational modification Phosphothreonine. 3 helical membrane passes run 29 to 46 (YIGW…TATS), 118 to 133 (HFLL…EWEL), and 142 to 156 (WIAV…AAAA). His118 provides a ligand contact to chlorophyll a. Tyr126 is a pheophytin a binding site. The [CaMn4O5] cluster site is built by Asp170 and Glu189. The chain crosses the membrane as a helical span at residues 197–218 (FHMLGVAGVFGGSLFSAMHGSL). Position 198 (His198) interacts with chlorophyll a. Residues His215 and 264–265 (SF) contribute to the a quinone site. His215 is a binding site for Fe cation. Residue His272 participates in Fe cation binding. The helical transmembrane segment at 274–288 (FLAAWPVVGIWFTAL) threads the bilayer. [CaMn4O5] cluster is bound by residues His332, Glu333, Asp342, and Ala344. A propeptide spanning residues 345-353 (SVEAPSVKA) is cleaved from the precursor.

The protein belongs to the reaction center PufL/M/PsbA/D family. As to quaternary structure, PSII is composed of 1 copy each of membrane proteins PsbA, PsbB, PsbC, PsbD, PsbE, PsbF, PsbH, PsbI, PsbJ, PsbK, PsbL, PsbM, PsbT, PsbX, PsbY, PsbZ, Psb30/Ycf12, at least 3 peripheral proteins of the oxygen-evolving complex and a large number of cofactors. It forms dimeric complexes. Requires The D1/D2 heterodimer binds P680, chlorophylls that are the primary electron donor of PSII, and subsequent electron acceptors. It shares a non-heme iron and each subunit binds pheophytin, quinone, additional chlorophylls, carotenoids and lipids. D1 provides most of the ligands for the Mn4-Ca-O5 cluster of the oxygen-evolving complex (OEC). There is also a Cl(-1) ion associated with D1 and D2, which is required for oxygen evolution. The PSII complex binds additional chlorophylls, carotenoids and specific lipids. as cofactor. In terms of processing, tyr-161 forms a radical intermediate that is referred to as redox-active TyrZ, YZ or Y-Z. C-terminally processed by CTPA; processing is essential to allow assembly of the oxygen-evolving complex and thus photosynthetic growth.

It localises to the plastid. The protein localises to the chloroplast thylakoid membrane. It catalyses the reaction 2 a plastoquinone + 4 hnu + 2 H2O = 2 a plastoquinol + O2. In terms of biological role, photosystem II (PSII) is a light-driven water:plastoquinone oxidoreductase that uses light energy to abstract electrons from H(2)O, generating O(2) and a proton gradient subsequently used for ATP formation. It consists of a core antenna complex that captures photons, and an electron transfer chain that converts photonic excitation into a charge separation. The D1/D2 (PsbA/PsbD) reaction center heterodimer binds P680, the primary electron donor of PSII as well as several subsequent electron acceptors. The sequence is that of Photosystem II protein D1 from Angiopteris evecta (Mule's foot fern).